The chain runs to 456 residues: Chromosomal replication initiator protein DnaA (456 aa).

The domain I, interacts with DnaA modulators stretch occupies residues 1–73 (MEIYLDNLWD…ADVVHDILGY (73 aa)). The segment at 73-117 (YPVEIYLTTFLVEDSRKNDSGLIWSEHKSVNILGENLSIPKPLPA) is domain II. The segment at 118–334 (NLNAKYMFSR…GALTRVVTYI (217 aa)) is domain III, AAA+ region. Residues Gly-162, Gly-164, Lys-165, and Thr-166 each contribute to the ATP site. Residues 335 to 456 (SISGLPMTVE…SDRINFSSRH (122 aa)) form a domain IV, binds dsDNA region.

The protein belongs to the DnaA family. In terms of assembly, oligomerizes as a right-handed, spiral filament on DNA at oriC.

The protein localises to the cytoplasm. Functionally, plays an essential role in the initiation and regulation of chromosomal replication. ATP-DnaA binds to the origin of replication (oriC) to initiate formation of the DNA replication initiation complex once per cell cycle. Binds the DnaA box (a 9 base pair repeat at the origin) and separates the double-stranded (ds)DNA. Forms a right-handed helical filament on oriC DNA; dsDNA binds to the exterior of the filament while single-stranded (ss)DNA is stabiized in the filament's interior. The ATP-DnaA-oriC complex binds and stabilizes one strand of the AT-rich DNA unwinding element (DUE), permitting loading of DNA polymerase. After initiation quickly degrades to an ADP-DnaA complex that is not apt for DNA replication. Binds acidic phospholipids. The sequence is that of Chromosomal replication initiator protein DnaA from Trichodesmium erythraeum (strain IMS101).